The primary structure comprises 246 residues: Enolase-phosphatase E1 (246 aa).

Positions 15 and 17 each coordinate Mg(2+). Substrate-binding positions include 134–135 (SS) and lysine 174. A Mg(2+)-binding site is contributed by aspartate 201.

The protein belongs to the HAD-like hydrolase superfamily. MasA/MtnC family. In terms of assembly, monomer. The cofactor is Mg(2+).

It localises to the cytoplasm. The protein localises to the nucleus. It carries out the reaction 5-methylsulfanyl-2,3-dioxopentyl phosphate + H2O = 1,2-dihydroxy-5-(methylsulfanyl)pent-1-en-3-one + phosphate. The protein operates within amino-acid biosynthesis; L-methionine biosynthesis via salvage pathway; L-methionine from S-methyl-5-thio-alpha-D-ribose 1-phosphate: step 3/6. Its pathway is amino-acid biosynthesis; L-methionine biosynthesis via salvage pathway; L-methionine from S-methyl-5-thio-alpha-D-ribose 1-phosphate: step 4/6. Bifunctional enzyme that catalyzes the enolization of 2,3-diketo-5-methylthiopentyl-1-phosphate (DK-MTP-1-P) into the intermediate 2-hydroxy-3-keto-5-methylthiopentenyl-1-phosphate (HK-MTPenyl-1-P), which is then dephosphorylated to form the acireductone 1,2-dihydroxy-3-keto-5-methylthiopentene (DHK-MTPene). The sequence is that of Enolase-phosphatase E1 from Debaryomyces hansenii (strain ATCC 36239 / CBS 767 / BCRC 21394 / JCM 1990 / NBRC 0083 / IGC 2968) (Yeast).